Consider the following 242-residue polypeptide: Type III pantothenate kinase (242 aa).

7-14 (DLGNSRFK) is a binding site for ATP. Substrate is bound by residues tyrosine 91 and 98 to 101 (GVDR). Residue aspartate 100 is the Proton acceptor of the active site. An ATP-binding site is contributed by threonine 121. Substrate is bound at residue threonine 171.

This sequence belongs to the type III pantothenate kinase family. Homodimer. Requires NH4(+) as cofactor. The cofactor is K(+).

It localises to the cytoplasm. It catalyses the reaction (R)-pantothenate + ATP = (R)-4'-phosphopantothenate + ADP + H(+). Its pathway is cofactor biosynthesis; coenzyme A biosynthesis; CoA from (R)-pantothenate: step 1/5. Its function is as follows. Catalyzes the phosphorylation of pantothenate (Pan), the first step in CoA biosynthesis. The polypeptide is Type III pantothenate kinase (Xanthomonas oryzae pv. oryzae (strain MAFF 311018)).